We begin with the raw amino-acid sequence, 264 residues long: S-adenosylmethionine decarboxylase proenzyme (264 aa).

Ser-113 functions as the Schiff-base intermediate with substrate; via pyruvic acid in the catalytic mechanism. Ser-113 is subject to Pyruvic acid (Ser); by autocatalysis. The Proton acceptor; for processing activity role is filled by His-118. The Proton donor; for catalytic activity role is filled by Cys-141.

Belongs to the prokaryotic AdoMetDC family. Type 2 subfamily. In terms of assembly, heterooctamer of four alpha and four beta chains arranged as a tetramer of alpha/beta heterodimers. Pyruvate is required as a cofactor. Post-translationally, is synthesized initially as an inactive proenzyme. Formation of the active enzyme involves a self-maturation process in which the active site pyruvoyl group is generated from an internal serine residue via an autocatalytic post-translational modification. Two non-identical subunits are generated from the proenzyme in this reaction, and the pyruvate is formed at the N-terminus of the alpha chain, which is derived from the carboxyl end of the proenzyme. The post-translation cleavage follows an unusual pathway, termed non-hydrolytic serinolysis, in which the side chain hydroxyl group of the serine supplies its oxygen atom to form the C-terminus of the beta chain, while the remainder of the serine residue undergoes an oxidative deamination to produce ammonia and the pyruvoyl group blocking the N-terminus of the alpha chain.

The catalysed reaction is S-adenosyl-L-methionine + H(+) = S-adenosyl 3-(methylsulfanyl)propylamine + CO2. It functions in the pathway amine and polyamine biosynthesis; S-adenosylmethioninamine biosynthesis; S-adenosylmethioninamine from S-adenosyl-L-methionine: step 1/1. Its function is as follows. Catalyzes the decarboxylation of S-adenosylmethionine to S-adenosylmethioninamine (dcAdoMet), the propylamine donor required for the synthesis of the polyamines spermine and spermidine from the diamine putrescine. In Pseudomonas paraeruginosa (strain DSM 24068 / PA7) (Pseudomonas aeruginosa (strain PA7)), this protein is S-adenosylmethionine decarboxylase proenzyme.